The following is a 96-amino-acid chain: (4S)-4-hydroxy-5-phosphonooxypentane-2,3-dione isomerase (96 aa).

Positions His-2 to Phe-91 constitute an ABM domain.

It belongs to the LsrG family. Homodimer.

It localises to the cytoplasm. It catalyses the reaction (2S)-2-hydroxy-3,4-dioxopentyl phosphate = 3-hydroxy-2,4-dioxopentyl phosphate. Functionally, involved in the degradation of phospho-AI-2, thereby terminating induction of the lsr operon and closing the AI-2 signaling cycle. Catalyzes the conversion of (4S)-4-hydroxy-5-phosphonooxypentane-2,3-dione (P-DPD) to 3-hydroxy-5-phosphonooxypentane-2,4-dione (P-HPD). The chain is (4S)-4-hydroxy-5-phosphonooxypentane-2,3-dione isomerase from Escherichia coli O157:H7.